A 780-amino-acid chain; its full sequence is MAARDRRSEPPQLAEYSCSYAVSRPVYSELAFQQQRERRLPERRTLRDSLARSCSCSRKRAFGALKALLPILDWLPKYRVKEWLLSDIISGVSTGLVGTLQGMAYALLAAVPVQYGLYSAFFPILTYFVFGTSRHISVGPFPVVSLMVGSVVLSMAPDDHFLVPSGNGSTLNTTTLDTGTRDAARVLLASTLTLLVGIIQLVFGGLQIGFIVRYLADPLVGGFTTAAAFQVLVSQLKIVLNVSTKNYNGVLSIIYTLIEIFQNIGDTNIADFIAGLLTIIVCMAVKELNDRFKHKIPVPIPIEVIVTIIATAISYGANLEANYNAGIVKSIPSGFLPPVLPSVGLFSDMLAASFSIAVVAYAIAVSVGKVYATKHDYIIDGNQEFIAFGISNVFSGFFSCFVATTALSRTAVQESTGGKTQVAGLISAVIVMVAIVALGKLLEPLQKSVLAAVVIANLKGMFMQVCDVPRLWKQNKTDAVIWVFTCIMSIILGLDLGLLAGLLFGLLTVVLRVQFPSWNGLGSVPSTDIYKSITHYKNLEEPEGVKILRFSSPIFYGNVDGFKKCVKSTVGFDAIRVYNKRLKALRRIQKLIKKGQLRATKNGIISDVGSSNNAFEPDEDVEEPEELDIPTKEIEIQVDWNSELPVKVNVPKVPIHSLVLDCGAVSFLDVVGVRSLRMIVKEFQRIDVNVYFALLQDDVLEKMEQCGFFDDNIRKDRFFLTVHDAILYLQNQAKSREGQDSLLETITLIQDCKDPLELMEAEINEEELDVQDEAMRRLAS.

Topologically, residues 1–87 (MAARDRRSEP…YRVKEWLLSD (87 aa)) are cytoplasmic. Residues 88–108 (IISGVSTGLVGTLQGMAYALL) traverse the membrane as a helical segment. Ala-109 is a topological domain (extracellular). Residues 110–130 (AVPVQYGLYSAFFPILTYFVF) traverse the membrane as a helical segment. Topologically, residues 131–135 (GTSRH) are cytoplasmic. A helical transmembrane segment spans residues 136-156 (ISVGPFPVVSLMVGSVVLSMA). Residues 157-191 (PDDHFLVPSGNGSTLNTTTLDTGTRDAARVLLAST) are Extracellular-facing. A helical membrane pass occupies residues 192-212 (LTLLVGIIQLVFGGLQIGFIV). The Cytoplasmic portion of the chain corresponds to 213–218 (RYLADP). The chain crosses the membrane as a helical span at residues 219–239 (LVGGFTTAAAFQVLVSQLKIV). Topologically, residues 240–263 (LNVSTKNYNGVLSIIYTLIEIFQN) are extracellular. A helical transmembrane segment spans residues 264–284 (IGDTNIADFIAGLLTIIVCMA). The Cytoplasmic portion of the chain corresponds to 285-295 (VKELNDRFKHK). The chain crosses the membrane as a helical span at residues 296-316 (IPVPIPIEVIVTIIATAISYG). Topologically, residues 317-344 (ANLEANYNAGIVKSIPSGFLPPVLPSVG) are extracellular. A helical transmembrane segment spans residues 345–365 (LFSDMLAASFSIAVVAYAIAV). Over 366 to 384 (SVGKVYATKHDYIIDGNQE) the chain is Cytoplasmic. The helical transmembrane segment at 385-405 (FIAFGISNVFSGFFSCFVATT) threads the bilayer. Topologically, residues 406-421 (ALSRTAVQESTGGKTQ) are extracellular. A helical transmembrane segment spans residues 422 to 442 (VAGLISAVIVMVAIVALGKLL). Over 443-448 (EPLQKS) the chain is Cytoplasmic. Residues 449-469 (VLAAVVIANLKGMFMQVCDVP) traverse the membrane as a helical segment. Residues 470–486 (RLWKQNKTDAVIWVFTC) are Extracellular-facing. A helical membrane pass occupies residues 487–507 (IMSIILGLDLGLLAGLLFGLL). The Cytoplasmic portion of the chain corresponds to 508 to 780 (TVVLRVQFPS…QDEAMRRLAS (273 aa)). Residues 535 to 729 (HYKNLEEPEG…LTVHDAILYL (195 aa)) form the STAS domain.

The protein belongs to the SLC26A/SulP transporter (TC 2.A.53) family. Highly expressed in the kidney (at protein level).

The protein resides in the cell membrane. It is found in the apical cell membrane. The catalysed reaction is chloride(in) = chloride(out). It catalyses the reaction iodide(out) = iodide(in). The enzyme catalyses hydrogencarbonate(in) + chloride(out) = hydrogencarbonate(out) + chloride(in). It carries out the reaction iodide(in) + hydrogencarbonate(out) = iodide(out) + hydrogencarbonate(in). The catalysed reaction is iodide(in) + chloride(out) = iodide(out) + chloride(in). It catalyses the reaction formate(in) + chloride(out) = formate(out) + chloride(in). Its function is as follows. Sodium-independent transporter of chloride and iodide. Mediates electroneutral chloride-bicarbonate and chloride-formate exchange with 1:1 stoichiometry. Mediates electroneutral iodide-chloride and iodide-bicarbonate exchange. The chain is Pendrin (Slc26a4) from Rattus norvegicus (Rat).